We begin with the raw amino-acid sequence, 498 residues long: AP2-like ethylene-responsive transcription factor AIL7 (498 aa).

Positions 186-195 (TSDQPLSCNN) are enriched in polar residues. A disordered region spans residues 186-220 (TSDQPLSCNNGERGGNSNKKKTVSKKETSDDSKKK). Residues 209–220 (SKKETSDDSKKK) are compositionally biased toward basic and acidic residues. 2 consecutive DNA-binding regions (AP2/ERF) follow at residues 231-297 (IYRG…TNFP) and 333-391 (IYRG…TNFE). Low complexity predominate over residues 422–451 (ESPSSSSSDHNLQQQQLLPSSSPSDQNPNS). The segment at 422–452 (ESPSSSSSDHNLQQQQLLPSSSPSDQNPNSI) is disordered.

This sequence belongs to the AP2/ERF transcription factor family. AP2 subfamily. In terms of assembly, interacts with HDG2, and possibly with HDG3, HDG7, ANL2, ATML1 and PDF2. As to expression, expressed in roots, seedlings, inflorescence, and siliques. Also detected at low levels in leaves.

Its subcellular location is the nucleus. Functionally, probably acts as a transcriptional activator. Binds to the GCC-box pathogenesis-related promoter element. May be involved in the regulation of gene expression by stress factors and by components of stress signal transduction pathways. This is AP2-like ethylene-responsive transcription factor AIL7 from Arabidopsis thaliana (Mouse-ear cress).